We begin with the raw amino-acid sequence, 854 residues long: Protein translocase subunit SecA (854 aa).

ATP-binding positions include Gln81, 99–103 (GEGKT), and Asp487.

This sequence belongs to the SecA family. In terms of assembly, monomer and homodimer. Part of the essential Sec protein translocation apparatus which comprises SecA, SecYEG and auxiliary proteins SecDF. Other proteins may also be involved.

The protein localises to the cell membrane. It localises to the cytoplasm. The catalysed reaction is ATP + H2O + cellular proteinSide 1 = ADP + phosphate + cellular proteinSide 2.. Part of the Sec protein translocase complex. Interacts with the SecYEG preprotein conducting channel. Has a central role in coupling the hydrolysis of ATP to the transfer of proteins into and across the cell membrane, serving as an ATP-driven molecular motor driving the stepwise translocation of polypeptide chains across the membrane. The chain is Protein translocase subunit SecA from Mycoplasma mobile (strain ATCC 43663 / 163K / NCTC 11711) (Mesomycoplasma mobile).